The following is a 382-amino-acid chain: Nonsense-mediated mRNA decay factor SMG9 (382 aa).

The segment at 1 to 66 (MKKVEILKTP…PDSSVSKSSG (66 aa)) is disordered.

Belongs to the SMG9 family.

Its function is as follows. Involved in nonsense-mediated decay (NMD) of mRNAs containing premature stop codons. Probable component of kinase complex containing smg-1 and recruited to stalled ribosomes. This Caenorhabditis briggsae protein is Nonsense-mediated mRNA decay factor SMG9 (smg-9).